The primary structure comprises 228 residues: Endonuclease V (228 aa).

Mg(2+) contacts are provided by aspartate 43 and aspartate 109.

Belongs to the endonuclease V family. Mg(2+) is required as a cofactor.

It is found in the cytoplasm. The enzyme catalyses Endonucleolytic cleavage at apurinic or apyrimidinic sites to products with a 5'-phosphate.. In terms of biological role, DNA repair enzyme involved in the repair of deaminated bases. Selectively cleaves double-stranded DNA at the second phosphodiester bond 3' to a deoxyinosine leaving behind the intact lesion on the nicked DNA. The chain is Endonuclease V from Dictyoglomus thermophilum (strain ATCC 35947 / DSM 3960 / H-6-12).